A 504-amino-acid polypeptide reads, in one-letter code: Glucose-6-phosphate isomerase (504 aa).

The active-site Proton donor is the Glu-333. Active-site residues include His-364 and Lys-473.

It belongs to the GPI family.

The protein resides in the cytoplasm. The catalysed reaction is alpha-D-glucose 6-phosphate = beta-D-fructose 6-phosphate. Its pathway is carbohydrate biosynthesis; gluconeogenesis. It functions in the pathway carbohydrate degradation; glycolysis; D-glyceraldehyde 3-phosphate and glycerone phosphate from D-glucose: step 2/4. In terms of biological role, catalyzes the reversible isomerization of glucose-6-phosphate to fructose-6-phosphate. The polypeptide is Glucose-6-phosphate isomerase (Xanthomonas oryzae pv. oryzae (strain PXO99A)).